We begin with the raw amino-acid sequence, 722 residues long: G2-specific protein kinase fin1 (722 aa).

One can recognise a Protein kinase domain in the interval 4–281 (YKILECIGHG…TYQLLRSPIL (278 aa)). ATP contacts are provided by residues 10–18 (IGHGSFGRI) and Lys-33. The active-site Proton acceptor is the Asp-151. Positions 528-557 (LSVESDETAVSASSGESVPTDSTLTDTKSK) are disordered. A compositionally biased stretch (polar residues) spans 535-546 (TAVSASSGESVP).

Belongs to the protein kinase superfamily. Ser/Thr protein kinase family. NIMA subfamily.

The protein localises to the cytoplasm. It is found in the cytoskeleton. It localises to the microtubule organizing center. The protein resides in the spindle pole body. It carries out the reaction L-seryl-[protein] + ATP = O-phospho-L-seryl-[protein] + ADP + H(+). The catalysed reaction is L-threonyl-[protein] + ATP = O-phospho-L-threonyl-[protein] + ADP + H(+). Promotes chromosome condensation and nuclear envelope dynamics during mitosis. Activity appears at metaphase-anaphase transition. In Schizosaccharomyces pombe (strain 972 / ATCC 24843) (Fission yeast), this protein is G2-specific protein kinase fin1 (fin1).